A 138-amino-acid chain; its full sequence is Putative pre-16S rRNA nuclease (138 aa).

It belongs to the YqgF nuclease family.

Its subcellular location is the cytoplasm. Could be a nuclease involved in processing of the 5'-end of pre-16S rRNA. The chain is Putative pre-16S rRNA nuclease from Geobacillus kaustophilus (strain HTA426).